A 162-amino-acid polypeptide reads, in one-letter code: Lectin BRA-3 (162 aa).

An N-terminal signal peptide occupies residues 1 to 24; that stretch reads MQRSEIVQAVTLLVVVFAITTAEC. The C-type lectin domain occupies 25–152; sequence TCPGNLDWQE…NKNKNFLCKM (128 aa). 3 cysteine pairs are disulfide-bonded: cysteine 26–cysteine 39, cysteine 56–cysteine 150, and cysteine 125–cysteine 142.

Homotetramer; disulfide-linked. In terms of tissue distribution, coelemic fluid.

In terms of biological role, sugar-binding protein which recognizes specific carbohydrate structures and agglutinates a variety of animal cells by binding to cell-surface glycoproteins and glycolipids. Calcium-dependent lectin. Invertebrate lectins may be involved in defense functions. The polypeptide is Lectin BRA-3 (Megabalanus rosa (Acorn barnacle)).